The sequence spans 285 residues: Bifunctional protein FolD (285 aa).

Residues 165-167 (GRS) and Ser-190 each bind NADP(+).

The protein belongs to the tetrahydrofolate dehydrogenase/cyclohydrolase family. Homodimer.

The catalysed reaction is (6R)-5,10-methylene-5,6,7,8-tetrahydrofolate + NADP(+) = (6R)-5,10-methenyltetrahydrofolate + NADPH. The enzyme catalyses (6R)-5,10-methenyltetrahydrofolate + H2O = (6R)-10-formyltetrahydrofolate + H(+). The protein operates within one-carbon metabolism; tetrahydrofolate interconversion. Its function is as follows. Catalyzes the oxidation of 5,10-methylenetetrahydrofolate to 5,10-methenyltetrahydrofolate and then the hydrolysis of 5,10-methenyltetrahydrofolate to 10-formyltetrahydrofolate. This Burkholderia pseudomallei (strain 1106a) protein is Bifunctional protein FolD.